The primary structure comprises 326 residues: Tetraacyldisaccharide 4'-kinase (326 aa).

Residue 54–61 (SVGGTGKT) participates in ATP binding.

Belongs to the LpxK family.

It catalyses the reaction a lipid A disaccharide + ATP = a lipid IVA + ADP + H(+). It participates in glycolipid biosynthesis; lipid IV(A) biosynthesis; lipid IV(A) from (3R)-3-hydroxytetradecanoyl-[acyl-carrier-protein] and UDP-N-acetyl-alpha-D-glucosamine: step 6/6. Functionally, transfers the gamma-phosphate of ATP to the 4'-position of a tetraacyldisaccharide 1-phosphate intermediate (termed DS-1-P) to form tetraacyldisaccharide 1,4'-bis-phosphate (lipid IVA). The protein is Tetraacyldisaccharide 4'-kinase of Rickettsia canadensis (strain McKiel).